A 46-amino-acid chain; its full sequence is U1-plectoxin-Pt1f (46 aa).

Cystine bridges form between cysteine 4-cysteine 18, cysteine 11-cysteine 24, cysteine 17-cysteine 35, cysteine 21-cysteine 44, and cysteine 26-cysteine 33.

Belongs to the neurotoxin 02 (plectoxin) family. 02 (plectoxin) subfamily. As to expression, expressed by the venom gland.

The protein localises to the secreted. Potent toxin that may paralyze and/or kill insect pests such as H.virescens (lepidoptera), S.exigua (beet armyworm) and M.sexta (tobacco hornworm). The protein is U1-plectoxin-Pt1f of Plectreurys tristis (Spider).